Consider the following 340-residue polypeptide: Protein-arginine kinase (340 aa).

The 222-residue stretch at 21–242 (VVLSSRIRLA…EQIIMQERVA (222 aa)) folds into the Phosphagen kinase C-terminal domain. Residues 24-28 (SSRIR), histidine 79, arginine 113, 164-168 (RASVM), and 195-200 (RGIYGE) each bind ATP.

It belongs to the ATP:guanido phosphotransferase family.

It carries out the reaction L-arginyl-[protein] + ATP = N(omega)-phospho-L-arginyl-[protein] + ADP + H(+). Catalyzes the specific phosphorylation of arginine residues in proteins. The chain is Protein-arginine kinase from Listeria innocua serovar 6a (strain ATCC BAA-680 / CLIP 11262).